Reading from the N-terminus, the 290-residue chain is Acetyl-coenzyme A carboxylase carboxyl transferase subunit beta (290 aa).

Residues 30–290 (IMTKCPKCKK…HAGQEVNKDA (261 aa)) enclose the CoA carboxyltransferase N-terminal domain. C34, C37, C53, and C56 together coordinate Zn(2+). The segment at 34–56 (CPKCKKIMYTKELSENLNVCFNC) adopts a C4-type zinc-finger fold.

The protein belongs to the AccD/PCCB family. Acetyl-CoA carboxylase is a heterohexamer composed of biotin carboxyl carrier protein (AccB), biotin carboxylase (AccC) and two subunits each of ACCase subunit alpha (AccA) and ACCase subunit beta (AccD). Requires Zn(2+) as cofactor.

It localises to the cytoplasm. It carries out the reaction N(6)-carboxybiotinyl-L-lysyl-[protein] + acetyl-CoA = N(6)-biotinyl-L-lysyl-[protein] + malonyl-CoA. The protein operates within lipid metabolism; malonyl-CoA biosynthesis; malonyl-CoA from acetyl-CoA: step 1/1. Functionally, component of the acetyl coenzyme A carboxylase (ACC) complex. Biotin carboxylase (BC) catalyzes the carboxylation of biotin on its carrier protein (BCCP) and then the CO(2) group is transferred by the transcarboxylase to acetyl-CoA to form malonyl-CoA. This chain is Acetyl-coenzyme A carboxylase carboxyl transferase subunit beta, found in Staphylococcus carnosus (strain TM300).